The primary structure comprises 100 residues: Co-chaperonin GroES (100 aa).

This sequence belongs to the GroES chaperonin family. Heptamer of 7 subunits arranged in a ring. Interacts with the chaperonin GroEL.

It is found in the cytoplasm. Together with the chaperonin GroEL, plays an essential role in assisting protein folding. The GroEL-GroES system forms a nano-cage that allows encapsulation of the non-native substrate proteins and provides a physical environment optimized to promote and accelerate protein folding. GroES binds to the apical surface of the GroEL ring, thereby capping the opening of the GroEL channel. The sequence is that of Co-chaperonin GroES from Mycolicibacterium smegmatis (strain ATCC 700084 / mc(2)155) (Mycobacterium smegmatis).